The primary structure comprises 186 residues: Low amplitude and bright protein LabA (186 aa).

Functions in an output pathway of the circadian clock. One of three clock output pathways. Involved in negative feedback regulation of KaiC; deletion leads to overexpression of KaiC protein and decreases the amplitude of the circadian response. Overexpression reduces the expression of circadian genes. The polypeptide is Low amplitude and bright protein LabA (Synechococcus elongatus (strain ATCC 33912 / PCC 7942 / FACHB-805) (Anacystis nidulans R2)).